Reading from the N-terminus, the 387-residue chain is Mitochondrial import inner membrane translocase subunit TIM50 (387 aa).

The N-terminal 26 residues, 1-26, are a transit peptide targeting the mitochondrion; sequence MSAVSVYPMCVRASRGLLRLRQGARC. Topologically, residues 27 to 100 are mitochondrial matrix; the sequence is STAPPLLDVV…QKENTAYAKK (74 aa). Residues 61–93 are disordered; the sequence is LQQQQKSQEQPPPEGEDSGHKQDEQGEDKKQKE. Basic and acidic residues predominate over residues 77–93; it reads DSGHKQDEQGEDKKQKE. Residues 101 to 121 traverse the membrane as a helical segment; that stretch reads MVLRLAGIMGLGGTVGIVYIF. Residues 122–387 lie on the Mitochondrial intermembrane side of the membrane; it reads GSNSVDEQGN…AGRFWSRKQQ (266 aa). Positions 178 to 321 constitute an FCP1 homology domain; that stretch reads YYQPPYTLVL…YDLAAFLKTI (144 aa).

The protein belongs to the TIM50 family. As to quaternary structure, component of the TIM23 complex at least composed of timm23, timm17 and timm50.

It is found in the mitochondrion inner membrane. Functionally, essential component of the TIM23 complex, a complex that mediates the translocation of transit peptide-containing proteins across the mitochondrial inner membrane. This Danio rerio (Zebrafish) protein is Mitochondrial import inner membrane translocase subunit TIM50 (timm50).